The following is a 236-amino-acid chain: Sugar fermentation stimulation protein homolog (236 aa).

This sequence belongs to the SfsA family.

The sequence is that of Sugar fermentation stimulation protein homolog from Desulfotalea psychrophila (strain LSv54 / DSM 12343).